The sequence spans 291 residues: Ribonuclease Z (291 aa).

The Zn(2+) site is built by H61, H63, D65, H66, H133, D201, and H257. The active-site Proton acceptor is the D65.

This sequence belongs to the RNase Z family. In terms of assembly, homodimer. Zn(2+) is required as a cofactor.

It catalyses the reaction Endonucleolytic cleavage of RNA, removing extra 3' nucleotides from tRNA precursor, generating 3' termini of tRNAs. A 3'-hydroxy group is left at the tRNA terminus and a 5'-phosphoryl group is left at the trailer molecule.. In terms of biological role, zinc phosphodiesterase, which displays some tRNA 3'-processing endonuclease activity. Probably involved in tRNA maturation, by removing a 3'-trailer from precursor tRNA. In Saccharolobus islandicus (strain L.S.2.15 / Lassen #1) (Sulfolobus islandicus), this protein is Ribonuclease Z.